We begin with the raw amino-acid sequence, 155 residues long: MSRRGTAEEKTAKSDPIYRNRLVNMLVNRILKHGKKSLAYQIIYRAMKKIQQKTETNPLSVLRQAIRGVTPDIAVKARRVGGSTHQVPIEIGSTQGKALAIRWLLGASRKRPGRNMAFKLSSELVDAAKGSGDAIRKKEETHRMAEANRAFAHFR.

This sequence belongs to the universal ribosomal protein uS7 family. As to quaternary structure, part of the 30S ribosomal subunit.

The protein localises to the plastid. Its subcellular location is the chloroplast. In terms of biological role, one of the primary rRNA binding proteins, it binds directly to 16S rRNA where it nucleates assembly of the head domain of the 30S subunit. This is Small ribosomal subunit protein uS7cz/uS7cy (rps7-A) from Eucalyptus globulus subsp. globulus (Tasmanian blue gum).